The chain runs to 358 residues: Adenosine deaminase (358 aa).

Zn(2+) is bound by residues His14 and His16. Residues His16, Asp18, and Gly183 each coordinate substrate. His212 is a Zn(2+) binding site. Catalysis depends on Glu215, which acts as the Proton donor. Asp294 is a Zn(2+) binding site. Asp295 contacts substrate.

Belongs to the metallo-dependent hydrolases superfamily. Adenosine and AMP deaminases family. Requires Zn(2+) as cofactor.

The protein resides in the cell membrane. It localises to the cell junction. It is found in the cytoplasmic vesicle lumen. Its subcellular location is the cytoplasm. The protein localises to the lysosome. The enzyme catalyses adenosine + H2O + H(+) = inosine + NH4(+). It carries out the reaction 2'-deoxyadenosine + H2O + H(+) = 2'-deoxyinosine + NH4(+). Functionally, catalyzes the hydrolytic deamination of adenosine and 2-deoxyadenosine. Plays an important role in purine metabolism and in adenosine homeostasis. Modulates signaling by extracellular adenosine, and so contributes indirectly to cellular signaling events. May act as a positive regulator of T-cell coactivation. This Xenopus tropicalis (Western clawed frog) protein is Adenosine deaminase (ada).